A 1403-amino-acid chain; its full sequence is DNA-directed RNA polymerase subunit beta' (1403 aa).

Residues cysteine 71, cysteine 73, cysteine 86, and cysteine 89 each contribute to the Zn(2+) site. Mg(2+) contacts are provided by aspartate 462, aspartate 464, and aspartate 466. 4 residues coordinate Zn(2+): cysteine 820, cysteine 893, cysteine 900, and cysteine 903.

This sequence belongs to the RNA polymerase beta' chain family. The RNAP catalytic core consists of 2 alpha, 1 beta, 1 beta' and 1 omega subunit. When a sigma factor is associated with the core the holoenzyme is formed, which can initiate transcription. Mg(2+) serves as cofactor. The cofactor is Zn(2+).

It carries out the reaction RNA(n) + a ribonucleoside 5'-triphosphate = RNA(n+1) + diphosphate. DNA-dependent RNA polymerase catalyzes the transcription of DNA into RNA using the four ribonucleoside triphosphates as substrates. This chain is DNA-directed RNA polymerase subunit beta', found in Methylobacterium radiotolerans (strain ATCC 27329 / DSM 1819 / JCM 2831 / NBRC 15690 / NCIMB 10815 / 0-1).